Reading from the N-terminus, the 326-residue chain is Aldo-keto reductase family 1 member D1 (326 aa).

NADP(+)-binding positions include 22–26 and Asp-52; that span reads GLGTY. Position 26 (Tyr-26) interacts with substrate. Substrate is bound by residues Tyr-57, Trp-88, Glu-119, and Tyr-131. Catalysis depends on Tyr-57, which acts as the Proton donor. Residues 168-169, Gln-192, and 219-224 contribute to the NADP(+) site; these read SN and YSPLGT. Trp-230 contributes to the substrate binding site. Position 273-283 (273-283) interacts with NADP(+); that stretch reads KSTTPERIKEN.

It belongs to the aldo/keto reductase family. In terms of processing, the N-terminus is blocked.

The protein localises to the cytoplasm. The catalysed reaction is 5beta-cholestan-3-one + NADP(+) = cholest-4-en-3-one + NADPH + H(+). It catalyses the reaction 4,5beta-dihydrocortisone + NADP(+) = cortisone + NADPH + H(+). The enzyme catalyses cortisol + NADPH + H(+) = 5beta-dihydrocortisol + NADP(+). It carries out the reaction corticosterone + NADPH + H(+) = 5beta-dihydrocorticosterone + NADP(+). The catalysed reaction is 7alpha,12alpha-dihydroxycholest-4-en-3-one + NADPH + H(+) = 7alpha,12alpha-dihydroxy-5beta-cholestan-3-one + NADP(+). It catalyses the reaction 7alpha-hydroxycholest-4-en-3-one + NADPH + H(+) = 7alpha-hydroxy-5beta-cholestan-3-one + NADP(+). The enzyme catalyses epitestosterone + NADPH + H(+) = 5beta-dihydroepitestosterone + NADP(+). It carries out the reaction androst-4-ene-3,17-dione + NADPH + H(+) = 5beta-androstane-3,17-dione + NADP(+). The catalysed reaction is progesterone + NADPH + H(+) = 5beta-pregnan-3,20-dione + NADP(+). It catalyses the reaction 21-hydroxyprogesterone + NADPH + H(+) = 5beta-dihydrodeoxycorticosterone + NADP(+). The enzyme catalyses aldosterone + NADPH + H(+) = 5beta-dihydroaldosterone + NADP(+). It carries out the reaction 17beta-hydroxyandrosta-1,4-dien-3-one + NADPH + H(+) = 17beta-hydroxy-5beta-androst-1-en-3-one + NADP(+). The catalysed reaction is 17beta-hydroxyestr-4-en-3-one + NADPH + H(+) = 17beta-hydroxy-5beta-estran-3-one + NADP(+). It catalyses the reaction 5beta-dihydrotestosterone + NADP(+) = testosterone + NADPH + H(+). The enzyme catalyses androst-4-ene-3,11,17-trione + NADPH + H(+) = 17beta-hydroxyandrost-4-ene-3,11-dione + NADP(+). Subject to inhibition by high substrate concentrations. Inhibited by testosterone concentrations above 10 uM. Inhibited by the primary and secondary bile acids chenodeoxycholic acid and ursodeoxycholic acid. In terms of biological role, catalyzes the stereospecific NADPH-dependent reduction of the C4-C5 double bond of bile acid intermediates and steroid hormones carrying a delta(4)-3-one structure to yield an A/B cis-ring junction. This cis-configuration is crucial for bile acid biosynthesis and plays important roles in steroid metabolism. Capable of reducing a broad range of delta-(4)-3-ketosteroids from C18 (such as, 17beta-hydroxyestr-4-en-3-one) to C27 (such as, 7alpha-hydroxycholest-4-en-3-one). The polypeptide is Aldo-keto reductase family 1 member D1 (Akr1d1) (Rattus norvegicus (Rat)).